Consider the following 842-residue polypeptide: Glucans biosynthesis glucosyltransferase H (842 aa).

Transmembrane regions (helical) follow at residues 140–160 (ILLL…KTIL), 194–214 (ILIL…TALM), 513–533 (VFLT…FLAL), 568–588 (IALF…SIIL), 600–620 (FIRV…LAPV), 622–642 (MLFH…VWNS), 656–676 (FMRH…MAWL), and 680–700 (FLFW…VSAI).

Belongs to the glycosyltransferase 2 family. OpgH subfamily.

The protein resides in the cell inner membrane. The protein operates within glycan metabolism; osmoregulated periplasmic glucan (OPG) biosynthesis. Involved in the biosynthesis of osmoregulated periplasmic glucans (OPGs). This is Glucans biosynthesis glucosyltransferase H from Klebsiella pneumoniae (strain 342).